Reading from the N-terminus, the 1342-residue chain is DNA-directed RNA polymerase subunit beta (1342 aa).

It belongs to the RNA polymerase beta chain family. As to quaternary structure, the RNAP catalytic core consists of 2 alpha, 1 beta, 1 beta' and 1 omega subunit. When a sigma factor is associated with the core the holoenzyme is formed, which can initiate transcription.

The catalysed reaction is RNA(n) + a ribonucleoside 5'-triphosphate = RNA(n+1) + diphosphate. Functionally, DNA-dependent RNA polymerase catalyzes the transcription of DNA into RNA using the four ribonucleoside triphosphates as substrates. This chain is DNA-directed RNA polymerase subunit beta, found in Pectobacterium atrosepticum (strain SCRI 1043 / ATCC BAA-672) (Erwinia carotovora subsp. atroseptica).